Reading from the N-terminus, the 1451-residue chain is DNA excision repair protein ERCC-6-like (1451 aa).

One copy of the TPR 1 repeat lies at 27-60; that stretch reads YDRYRQKGKEAALNGELPRALELFQLAYQLQPSE. The Helicase ATP-binding domain occupies 118 to 286; sequence SLYRDGRKGG…WALFDFACQG (169 aa). 131 to 138 provides a ligand contact to ATP; that stretch reads DDMGLGKT. Residues 237–240 carry the DEAH box motif; sequence DEAH. Residues 479–639 enclose the Helicase C-terminal domain; sequence FVVSLMECLR…PFRYFSKQEL (161 aa). Disordered stretches follow at residues 647 to 669, 778 to 804, 935 to 1006, 1035 to 1054, 1063 to 1083, 1096 to 1140, and 1182 to 1343; these read DTRS…RSDT, NSFD…ETAS, DDTS…ATTD, DEEV…EFQL, LEEP…NYND, RSTP…LTSS, and LLEN…SAEL. The span at 781–804 shows a compositional bias: acidic residues; that stretch reads DEPEFEEDEQNLPSAEDAEMETAS. 2 stretches are compositionally biased toward polar residues: residues 944 to 964 and 992 to 1002; these read SDFN…SPSL and QVLSSPLSQHE. Ser-961 is modified (phosphoserine). Positions 1035–1050 are enriched in acidic residues; sequence DEEVHEVEESAAEESP. Basic and acidic residues predominate over residues 1063-1074; the sequence is LEEPSINHDKQN. Over residues 1121 to 1132 the composition is skewed to acidic residues; it reads DTEEEEEEEEES. The segment covering 1213-1230 has biased composition (polar residues); it reads VQTSSGDNSKSYETSEAN. Residues 1244–1278 are compositionally biased toward basic and acidic residues; sequence YREGKNTSDKVSESNETHSEEFAEEEKPSGDKSES. The segment covering 1310 to 1341 has biased composition (acidic residues); the sequence is SEADESVVEEEEPSGETLNTEESEMGEEEESA. Residues 1402 to 1435 form a TPR 2 repeat; the sequence is YNLLVLSGKQSLAEGRKQEALDFFLKAIDINTGD.

The protein belongs to the SNF2/RAD54 helicase family.

Its subcellular location is the chromosome. The protein resides in the centromere. It localises to the kinetochore. The enzyme catalyses ATP + H2O = ADP + phosphate + H(+). In terms of biological role, DNA helicase that acts as a tension sensor that associates with catenated DNA which is stretched under tension until it is resolved during anaphase. Functions as ATP-dependent DNA translocase. Can promote Holliday junction branch migration (in vitro). This is DNA excision repair protein ERCC-6-like (ercc6l) from Danio rerio (Zebrafish).